Consider the following 711-residue polypeptide: Ent-copalyl diphosphate synthase 1 (711 aa).

Lys-145 contacts substrate. Mg(2+) contacts are provided by Asp-277 and Asp-279. Residues 277-280 (DIDD) carry the DXDD motif motif. A substrate-binding site is contributed by Lys-364.

The protein belongs to the terpene synthase family. Tpsc subfamily. Requires Mg(2+) as cofactor.

It carries out the reaction (2E,6E,10E)-geranylgeranyl diphosphate = ent-copalyl diphosphate. Its pathway is secondary metabolite biosynthesis; terpenoid biosynthesis. Its function is as follows. Involved in the biosynthesis of ent-kaurene diterpenoids natural products such as oridonin, miltiradiene, eriocalyxin B and nezukol, known to exhibit antitumor, anti-inflammatory and antibacterial activities. Catalyzes the conversion of (2E,6E,10E)-geranylgeranyl diphosphate (GGPP) to ent-copalyl diphosphate (ent-CPP). This chain is Ent-copalyl diphosphate synthase 1, found in Isodon japonicus (Scutellaria japonica).